A 189-amino-acid polypeptide reads, in one-letter code: Pyridoxal 5'-phosphate synthase subunit PdxT (189 aa).

Residue 50-52 (GES) coordinates L-glutamine. Cys80 functions as the Nucleophile in the catalytic mechanism. Residues Arg107 and 134-135 (IR) each bind L-glutamine. Catalysis depends on charge relay system residues His169 and Glu171.

This sequence belongs to the glutaminase PdxT/SNO family. In the presence of PdxS, forms a dodecamer of heterodimers. Only shows activity in the heterodimer.

It carries out the reaction aldehydo-D-ribose 5-phosphate + D-glyceraldehyde 3-phosphate + L-glutamine = pyridoxal 5'-phosphate + L-glutamate + phosphate + 3 H2O + H(+). It catalyses the reaction L-glutamine + H2O = L-glutamate + NH4(+). It participates in cofactor biosynthesis; pyridoxal 5'-phosphate biosynthesis. Its function is as follows. Catalyzes the hydrolysis of glutamine to glutamate and ammonia as part of the biosynthesis of pyridoxal 5'-phosphate. The resulting ammonia molecule is channeled to the active site of PdxS. This chain is Pyridoxal 5'-phosphate synthase subunit PdxT, found in Picrophilus torridus (strain ATCC 700027 / DSM 9790 / JCM 10055 / NBRC 100828 / KAW 2/3).